Here is a 406-residue protein sequence, read N- to C-terminus: Acetyltransferase sirH (406 aa).

The next 6 helical transmembrane spans lie at 9–29, 32–52, 63–83, 295–315, 323–343, and 358–378; these read IFIE…FALG, AHTF…CQSL, LLSN…WILL, VQLF…ALLC, SALF…HVIA, and FIGF…WVGS.

This sequence belongs to the wax synthase family.

It localises to the membrane. The protein operates within mycotoxin biosynthesis. Its function is as follows. Acetyltransferase; part of the gene cluster that mediates the biosynthesis of sirodesmin PL, an epipolythiodioxopiperazine (ETP) characterized by a disulfide bridged cyclic dipeptide and that acts as a phytotoxin which is involved in the blackleg didease of canola. SirD catalyzes the O-prenylation of L-tyrosine (L-Tyr) in the presence of dimethylallyl diphosphate (DMAPP) to yield 4-O-dimethylallyl-L-Tyr, and therefore represents probably the first pathway-specific enzyme in the biosynthesis of sirodesmin PL. 4-O-dimethylallyl-L-Tyr, then undergoes condensation with L-Ser in a reaction catalyzed by the non-ribosomal peptide synthase sirP to form the diketopiperazine (DKP) backbone. Further bishydroxylation of the DKP performed by the cytochrome P450 monooxygenase sirC leads to the production of the intermediate phomamide. This step is essential to form the reactive thiol group required for toxicity of sirodesmin PL. The next steps of sirodesmin biosynthesis are not well understood yet, but some predictions could be made from intermediate compounds identification. Phomamide is converted into phomalizarine via oxidation, probably by sirT. Further oxidation, methylation (by sirM or sirN) and reduction steps convert phomalizarine to deacetyl sirodesmin. Finally, acetyltransferase sirH probably acetylates deacetyl sirodesmin to produce sirodesmin PL. This is Acetyltransferase sirH from Leptosphaeria maculans (Blackleg fungus).